The primary structure comprises 525 residues: ATP synthase subunit alpha (525 aa).

171–178 (GDRQTGKS) provides a ligand contact to ATP.

It belongs to the ATPase alpha/beta chains family. As to quaternary structure, F-type ATPases have 2 components, CF(1) - the catalytic core - and CF(0) - the membrane proton channel. CF(1) has five subunits: alpha(3), beta(3), gamma(1), delta(1), epsilon(1). CF(0) has three main subunits: a(1), b(2) and c(9-12). The alpha and beta chains form an alternating ring which encloses part of the gamma chain. CF(1) is attached to CF(0) by a central stalk formed by the gamma and epsilon chains, while a peripheral stalk is formed by the delta and b chains.

It is found in the cell inner membrane. It catalyses the reaction ATP + H2O + 4 H(+)(in) = ADP + phosphate + 5 H(+)(out). Functionally, produces ATP from ADP in the presence of a proton gradient across the membrane. The alpha chain is a regulatory subunit. This Flavobacterium psychrophilum (strain ATCC 49511 / DSM 21280 / CIP 103535 / JIP02/86) protein is ATP synthase subunit alpha.